Reading from the N-terminus, the 230-residue chain is NAD(P)H-hydrate epimerase (230 aa).

The YjeF N-terminal domain maps to 11-218; it reads AIDVDQELFT…ALQRKYELNL (208 aa). A (6S)-NADPHX-binding site is contributed by 61–65; sequence NNGGD. N62 and D126 together coordinate K(+). (6S)-NADPHX contacts are provided by residues 130-136 and D159; that span reads GFSFKPP. Position 162 (S162) interacts with K(+).

It belongs to the NnrE/AIBP family. Requires K(+) as cofactor.

It catalyses the reaction (6R)-NADHX = (6S)-NADHX. It carries out the reaction (6R)-NADPHX = (6S)-NADPHX. In terms of biological role, catalyzes the epimerization of the S- and R-forms of NAD(P)HX, a damaged form of NAD(P)H that is a result of enzymatic or heat-dependent hydration. This is a prerequisite for the S-specific NAD(P)H-hydrate dehydratase to allow the repair of both epimers of NAD(P)HX. The protein is NAD(P)H-hydrate epimerase of Drosophila erecta (Fruit fly).